Consider the following 342-residue polypeptide: S-adenosylmethionine:tRNA ribosyltransferase-isomerase (342 aa).

This sequence belongs to the QueA family. Monomer.

The protein resides in the cytoplasm. The catalysed reaction is 7-aminomethyl-7-carbaguanosine(34) in tRNA + S-adenosyl-L-methionine = epoxyqueuosine(34) in tRNA + adenine + L-methionine + 2 H(+). It participates in tRNA modification; tRNA-queuosine biosynthesis. Its function is as follows. Transfers and isomerizes the ribose moiety from AdoMet to the 7-aminomethyl group of 7-deazaguanine (preQ1-tRNA) to give epoxyqueuosine (oQ-tRNA). The chain is S-adenosylmethionine:tRNA ribosyltransferase-isomerase from Streptococcus pyogenes serotype M1.